We begin with the raw amino-acid sequence, 20 residues long: Manganese peroxidase H5 (20 aa).

This sequence belongs to the peroxidase family. Ligninase subfamily.

Its subcellular location is the secreted. It catalyses the reaction 2 Mn(2+) + H2O2 + 2 H(+) = 2 Mn(3+) + 2 H2O. Catalyzes the oxidation of Mn(2+) to Mn(3+). The latter, acting as a diffusible redox mediator, is capable of oxidizing a variety of lignin compounds. The protein is Manganese peroxidase H5 of Phanerodontia chrysosporium (White-rot fungus).